We begin with the raw amino-acid sequence, 424 residues long: Serine--tRNA ligase (424 aa).

230 to 232 (TAE) contributes to the L-serine binding site. Residue 261–263 (RSE) participates in ATP binding. L-serine is bound at residue E284. 348 to 351 (EISS) contacts ATP. An L-serine-binding site is contributed by S384.

The protein belongs to the class-II aminoacyl-tRNA synthetase family. Type-1 seryl-tRNA synthetase subfamily. Homodimer. The tRNA molecule binds across the dimer.

The protein resides in the cytoplasm. It carries out the reaction tRNA(Ser) + L-serine + ATP = L-seryl-tRNA(Ser) + AMP + diphosphate + H(+). The catalysed reaction is tRNA(Sec) + L-serine + ATP = L-seryl-tRNA(Sec) + AMP + diphosphate + H(+). Its pathway is aminoacyl-tRNA biosynthesis; selenocysteinyl-tRNA(Sec) biosynthesis; L-seryl-tRNA(Sec) from L-serine and tRNA(Sec): step 1/1. Functionally, catalyzes the attachment of serine to tRNA(Ser). Is also able to aminoacylate tRNA(Sec) with serine, to form the misacylated tRNA L-seryl-tRNA(Sec), which will be further converted into selenocysteinyl-tRNA(Sec). The sequence is that of Serine--tRNA ligase from Streptococcus pneumoniae (strain Hungary19A-6).